The chain runs to 1190 residues: Isoleucine--tRNA ligase, cytoplasmic (1190 aa).

The 'HIGH' region motif lies at 49–59 (PFATGLPHYGH). Positions 271–299 (DKPKAKLSNGPAGDTKKANPKAKGAKPES) are disordered. The 'KMSKS' region signature appears at 632–636 (KMAKK). Lys635 provides a ligand contact to ATP.

It belongs to the class-I aminoacyl-tRNA synthetase family.

The protein resides in the cytoplasm. The protein localises to the cytosol. The enzyme catalyses tRNA(Ile) + L-isoleucine + ATP = L-isoleucyl-tRNA(Ile) + AMP + diphosphate. The protein is Isoleucine--tRNA ligase, cytoplasmic of Arabidopsis thaliana (Mouse-ear cress).